A 261-amino-acid polypeptide reads, in one-letter code: MFEILFPALLTGIVLSLITAPLGVFVVWRKMAYFGDTLSHSALLGVALGIFLQVNPYIAIVVLTLILAIAMVWLESNTQFSIDTLLGIIAHSCLSLGVVTVGLLRNVRVDLMNYLFGDLLAINYTDLIYIGIGVIIVLSTLIYFWQSLLSTTVSPELAQVEGINIKKMRFILMILTALTIALSMKFVGALIITSLLIIPAATARRFARTPESMVGWAIIMSMLSIIGGLILSAFYDTAAGPSVVICSAFLFVLSLFKRERL.

Helical transmembrane passes span 8–28 (ALLTGIVLSLITAPLGVFVVW), 54–74 (VNPYIAIVVLTLILAIAMVWL), 84–104 (TLLGIIAHSCLSLGVVTVGLL), 125–145 (TDLIYIGIGVIIVLSTLIYFW), 171–191 (ILMILTALTIALSMKFVGALI), 214–234 (VGWAIIMSMLSIIGGLILSAF), and 236–256 (DTAAGPSVVICSAFLFVLSLF).

The protein belongs to the ABC-3 integral membrane protein family.

The protein localises to the cell inner membrane. Functionally, involved in the high-affinity zinc uptake transport system. This chain is High-affinity zinc uptake system membrane protein ZnuB (znuB), found in Haemophilus influenzae (strain ATCC 51907 / DSM 11121 / KW20 / Rd).